The primary structure comprises 61 residues: Small ribosomal subunit protein uS14B (61 aa).

Zn(2+)-binding residues include Cys-24, Cys-27, Cys-40, and Cys-43.

Belongs to the universal ribosomal protein uS14 family. Zinc-binding uS14 subfamily. Part of the 30S ribosomal subunit. Contacts proteins S3 and S10. Zn(2+) serves as cofactor.

In terms of biological role, binds 16S rRNA, required for the assembly of 30S particles and may also be responsible for determining the conformation of the 16S rRNA at the A site. In Staphylococcus epidermidis (strain ATCC 35984 / DSM 28319 / BCRC 17069 / CCUG 31568 / BM 3577 / RP62A), this protein is Small ribosomal subunit protein uS14B.